A 1505-amino-acid polypeptide reads, in one-letter code: Probable serine/threonine-protein kinase irlD (1505 aa).

The span at 1-18 (MGPKKGKRSHSKNHHHHN) shows a compositional bias: basic residues. 4 disordered regions span residues 1–30 (MGPKKGKRSHSKNHHHHNNGNNNNNNNSGG), 121–211 (IPQP…NNIL), 548–571 (TTTTTTTTTTTTTTIDKDEKDKEN), and 862–1013 (EENE…TIAT). Residues 139–158 (SISTTTTTTTATAIEIESSS) show a composition bias toward low complexity. A compositionally biased stretch (polar residues) spans 159 to 172 (GLTSNITDSTEIQL). Low complexity-rich tracts occupy residues 173–209 (DSTTTDTKTTSTTSTTTNNSSDSNNNNNNNNNNNSNN) and 548–561 (TTTTTTTTTTTTTT). Composition is skewed to basic and acidic residues over residues 562 to 571 (IDKDEKDKEN) and 862 to 882 (EENEKKRLKEKRKKEEKEKKK). Residues 846-892 (IRTEESLKAEKDLLEQEENEKKRLKEKRKKEEKEKKKQQNLKQKSLI) are a coiled coil. The span at 896–924 (TTTTTTTTPIPITVPIPTQTQTPTQTPTQ) shows a compositional bias: low complexity. The segment covering 925 to 943 (TPIPTPIPTTPIPTTPIPI) has biased composition (pro residues). Low complexity-rich tracts occupy residues 944-954 (PIQLTPTTPKT) and 960-977 (TPKTPTTPKTPITPKTPK). Positions 978-989 (NSTLDKQTISTP) are enriched in polar residues. A Protein kinase domain is found at 1054-1324 (RKDEFIIGRG…TENILLHPFF (271 aa)). ATP is bound by residues 1060–1068 (IGRGSNGTL) and lysine 1083. Aspartate 1194 acts as the Proton acceptor in catalysis. One can recognise a KEN domain in the interval 1327–1505 (HEKKVKFIDA…LIYFNDLIIK (179 aa)).

The protein belongs to the protein kinase superfamily. Ser/Thr protein kinase family.

The enzyme catalyses L-seryl-[protein] + ATP = O-phospho-L-seryl-[protein] + ADP + H(+). The catalysed reaction is L-threonyl-[protein] + ATP = O-phospho-L-threonyl-[protein] + ADP + H(+). The chain is Probable serine/threonine-protein kinase irlD (irlD) from Dictyostelium discoideum (Social amoeba).